Consider the following 265-residue polypeptide: Undecaprenyl-diphosphatase 1 (265 aa).

A run of 7 helical transmembrane segments spans residues 4-24, 42-62, 84-104, 108-128, 184-204, 217-237, and 245-265; these read IIIAFILGIVEGLAEFLPISS, AKTFEIVIQLGAILAIAILYH, FHVFLGVFPAVVAGLLLHDVI, LFQPYTVVIGLVAGAILMILA, SEFSFLIALPVMVGATSLDLL, MFAVGFITSFIVAMLAVVTFL, and LKPFAYYRILLAILFTLFVLL.

It belongs to the UppP family.

Its subcellular location is the cell membrane. The enzyme catalyses di-trans,octa-cis-undecaprenyl diphosphate + H2O = di-trans,octa-cis-undecaprenyl phosphate + phosphate + H(+). Functionally, catalyzes the dephosphorylation of undecaprenyl diphosphate (UPP). Confers resistance to bacitracin. The chain is Undecaprenyl-diphosphatase 1 from Bacillus cereus (strain ZK / E33L).